A 196-amino-acid polypeptide reads, in one-letter code: Probable thymidylate kinase (196 aa).

9 to 16 is a binding site for ATP; sequence GIDGSGKT.

This sequence belongs to the thymidylate kinase family.

The catalysed reaction is dTMP + ATP = dTDP + ADP. The polypeptide is Probable thymidylate kinase (Methanococcus aeolicus (strain ATCC BAA-1280 / DSM 17508 / OCM 812 / Nankai-3)).